The following is a 170-amino-acid chain: Acetyl-CoA decarbonylase/synthase complex subunit epsilon 1 (170 aa).

It belongs to the CdhB family. As to quaternary structure, heterotetramer of two alpha and two epsilon subunits. The ACDS complex is made up of alpha, epsilon, beta, gamma and delta subunits with a probable stoichiometry of (alpha(2)epsilon(2))(4)-beta(8)-(gamma(1)delta(1))(8).

It functions in the pathway one-carbon metabolism; methanogenesis from acetate. Part of a complex that catalyzes the reversible cleavage of acetyl-CoA, allowing growth on acetate as sole source of carbon and energy. The alpha-epsilon subcomponent functions as a carbon monoxide dehydrogenase. The precise role of the epsilon subunit is unclear; it may have a stabilizing role within the alpha(2)epsilon(2) component and/or be involved in electron transfer to FAD during a potential FAD-mediated CO oxidation. The protein is Acetyl-CoA decarbonylase/synthase complex subunit epsilon 1 of Methanosarcina barkeri (strain Fusaro / DSM 804).